The primary structure comprises 271 residues: Formamidopyrimidine-DNA glycosylase (271 aa).

Proline 2 acts as the Schiff-base intermediate with DNA in catalysis. Glutamate 3 functions as the Proton donor in the catalytic mechanism. Lysine 58 serves as the catalytic Proton donor; for beta-elimination activity. DNA-binding residues include histidine 91, arginine 110, and arginine 152. Residues 237 to 271 (WVYGRAGQSCRQCGELVSKTRQGQRSTFFCARCQH) form an FPG-type zinc finger. The active-site Proton donor; for delta-elimination activity is arginine 261.

The protein belongs to the FPG family. Monomer. Zn(2+) is required as a cofactor.

It carries out the reaction Hydrolysis of DNA containing ring-opened 7-methylguanine residues, releasing 2,6-diamino-4-hydroxy-5-(N-methyl)formamidopyrimidine.. The catalysed reaction is 2'-deoxyribonucleotide-(2'-deoxyribose 5'-phosphate)-2'-deoxyribonucleotide-DNA = a 3'-end 2'-deoxyribonucleotide-(2,3-dehydro-2,3-deoxyribose 5'-phosphate)-DNA + a 5'-end 5'-phospho-2'-deoxyribonucleoside-DNA + H(+). Its function is as follows. Involved in base excision repair of DNA damaged by oxidation or by mutagenic agents. Acts as a DNA glycosylase that recognizes and removes damaged bases. Has a preference for oxidized purines, such as 7,8-dihydro-8-oxoguanine (8-oxoG). Has AP (apurinic/apyrimidinic) lyase activity and introduces nicks in the DNA strand. Cleaves the DNA backbone by beta-delta elimination to generate a single-strand break at the site of the removed base with both 3'- and 5'-phosphates. The protein is Formamidopyrimidine-DNA glycosylase of Nitrosomonas europaea (strain ATCC 19718 / CIP 103999 / KCTC 2705 / NBRC 14298).